A 223-amino-acid polypeptide reads, in one-letter code: 7-cyano-7-deazaguanine synthase (223 aa).

Phe10–Leu20 provides a ligand contact to ATP. Zn(2+)-binding residues include Cys188, Cys197, Cys200, and Cys203.

The protein belongs to the QueC family. Requires Zn(2+) as cofactor.

It catalyses the reaction 7-carboxy-7-deazaguanine + NH4(+) + ATP = 7-cyano-7-deazaguanine + ADP + phosphate + H2O + H(+). It functions in the pathway purine metabolism; 7-cyano-7-deazaguanine biosynthesis. Functionally, catalyzes the ATP-dependent conversion of 7-carboxy-7-deazaguanine (CDG) to 7-cyano-7-deazaguanine (preQ(0)). The polypeptide is 7-cyano-7-deazaguanine synthase (Phocaeicola vulgatus (strain ATCC 8482 / DSM 1447 / JCM 5826 / CCUG 4940 / NBRC 14291 / NCTC 11154) (Bacteroides vulgatus)).